Here is a 415-residue protein sequence, read N- to C-terminus: Putative O-antigen transporter (415 aa).

Over Met1–Asn11 the chain is Cytoplasmic. Residues Val12–Tyr32 form a helical membrane-spanning segment. The Periplasmic portion of the chain corresponds to Leu33 to Asn41. Residues Phe42–Gly62 form a helical membrane-spanning segment. The Cytoplasmic segment spans residues Phe63 to Ser83. Residues Ile84 to Thr104 form a helical membrane-spanning segment. The Periplasmic portion of the chain corresponds to Ser105–Ala117. Residues Val118–Phe138 traverse the membrane as a helical segment. Residues Gln139–Ala173 lie on the Cytoplasmic side of the membrane. Residues Ile174–Val194 form a helical membrane-spanning segment. Over Val195–Val220 the chain is Periplasmic. A helical transmembrane segment spans residues Phe221–Ile241. Over Ser242–Thr295 the chain is Cytoplasmic. Residues Cys296–Val316 traverse the membrane as a helical segment. The Periplasmic portion of the chain corresponds to Lys317–Val328. A helical membrane pass occupies residues Ile329–Ile349. Residues Gln350–Ser362 lie on the Cytoplasmic side of the membrane. Residues Lys363–Phe383 form a helical membrane-spanning segment. Over Lys384–Glu385 the chain is Periplasmic. The helical transmembrane segment at Ile386 to Phe406 threads the bilayer. Over Val407–Cys415 the chain is Cytoplasmic.

This sequence belongs to the polysaccharide synthase family.

The protein resides in the cell inner membrane. It participates in bacterial outer membrane biogenesis; LPS O-antigen biosynthesis. Its function is as follows. May be involved in the translocation process of the nascent O-polysaccharide molecules and/or its ligation to lipid A core units. The chain is Putative O-antigen transporter (rfbX) from Escherichia coli (strain K12).